The following is a 130-amino-acid chain: MRHRKSGRQLNRNSSHRQAMFRNMASSLVRHEIIKTTLPKAKELRRVVEPLITLAKTDSVANRRLAFARTRDNEIVAKLFNELGPRFASRAGGYTRILKCGFRAGDNAPMAYIELVDRSVSQTEEVATAE.

This sequence belongs to the bacterial ribosomal protein bL17 family. As to quaternary structure, part of the 50S ribosomal subunit. Contacts protein L32.

This is Large ribosomal subunit protein bL17 from Pectobacterium atrosepticum (strain SCRI 1043 / ATCC BAA-672) (Erwinia carotovora subsp. atroseptica).